We begin with the raw amino-acid sequence, 155 residues long: Late embryogenesis abundant protein 2 (155 aa).

Positions 1 to 155 (MTSHDQSYRA…DKDHFPTNRH (155 aa)) are disordered. Basic and acidic residues-rich tracts occupy residues 11–21 (GEAKGRTEEKT) and 28–39 (IEDKAQAAKEKA). Residues 40 to 78 (QQAAQTAKDKTSQTAQAAKEKTQQTAQAAKDKTQQTTQA) are compositionally biased toward low complexity. A run of 2 repeats spans residues 53-63 (TAQAAKEKTQQ) and 64-74 (TAQAAKDKTQQ). The segment at 53 to 74 (TAQAAKEKTQQTAQAAKDKTQQ) is 2 X 11 AA approximate tandem repeats of T-A-Q-A-A-K-E-K-T-Q-Q. The span at 79–95 (TKEKAQDTTGRAKEKGS) shows a compositional bias: basic and acidic residues. Polar residues predominate over residues 97-120 (MGQSTKETAQSGKDNSAGFLQQTG). Basic and acidic residues predominate over residues 144-155 (DQDKDHFPTNRH).

This sequence belongs to the LEA type 4 family. In terms of tissue distribution, highest expression is found in seeds. No expression detected in adult tissues.

The chain is Late embryogenesis abundant protein 2 from Cicer arietinum (Chickpea).